A 140-amino-acid chain; its full sequence is Translation initiation factor 2 subunit beta (140 aa).

It belongs to the eIF-2-beta/eIF-5 family. In terms of assembly, heterotrimer composed of an alpha, a beta and a gamma chain.

Functionally, eIF-2 functions in the early steps of protein synthesis by forming a ternary complex with GTP and initiator tRNA. In Metallosphaera sedula (strain ATCC 51363 / DSM 5348 / JCM 9185 / NBRC 15509 / TH2), this protein is Translation initiation factor 2 subunit beta.